Here is a 174-residue protein sequence, read N- to C-terminus: Transcription antitermination protein NusB (174 aa).

This sequence belongs to the NusB family.

In terms of biological role, involved in transcription antitermination. Required for transcription of ribosomal RNA (rRNA) genes. Binds specifically to the boxA antiterminator sequence of the ribosomal RNA (rrn) operons. The chain is Transcription antitermination protein NusB from Rhodopseudomonas palustris (strain TIE-1).